The chain runs to 457 residues: tRNA-2-methylthio-N(6)-dimethylallyladenosine synthase (457 aa).

Residues 3-120 enclose the MTTase N-terminal domain; the sequence is KKVYVKTFGC…LPQMIDQRRA (118 aa). [4Fe-4S] cluster is bound by residues cysteine 12, cysteine 49, cysteine 83, cysteine 157, cysteine 161, and cysteine 164. Residues 143 to 377 enclose the Radical SAM core domain; it reads RVEGPSAFVS…QATIEENVAR (235 aa). A TRAM domain is found at 380–447; that stretch reads RSMVGKVERI…PHSLRGELLL (68 aa).

It belongs to the methylthiotransferase family. MiaB subfamily. Monomer. The cofactor is [4Fe-4S] cluster.

The protein resides in the cytoplasm. It catalyses the reaction N(6)-dimethylallyladenosine(37) in tRNA + (sulfur carrier)-SH + AH2 + 2 S-adenosyl-L-methionine = 2-methylsulfanyl-N(6)-dimethylallyladenosine(37) in tRNA + (sulfur carrier)-H + 5'-deoxyadenosine + L-methionine + A + S-adenosyl-L-homocysteine + 2 H(+). Catalyzes the methylthiolation of N6-(dimethylallyl)adenosine (i(6)A), leading to the formation of 2-methylthio-N6-(dimethylallyl)adenosine (ms(2)i(6)A) at position 37 in tRNAs that read codons beginning with uridine. The polypeptide is tRNA-2-methylthio-N(6)-dimethylallyladenosine synthase (Burkholderia ambifaria (strain ATCC BAA-244 / DSM 16087 / CCUG 44356 / LMG 19182 / AMMD) (Burkholderia cepacia (strain AMMD))).